A 441-amino-acid chain; its full sequence is Interferon-related developmental regulator 2 (441 aa).

A compositionally biased stretch (basic residues) spans 1–15; the sequence is MPRARKGNALRKGGQ. A disordered region spans residues 1-51; the sequence is MPRARKGNALRKGGQRRGGGARSSTQADSGSSEDEAASEARSTTSDCPSLL.

This sequence belongs to the IFRD family. Associates with ribosomes; promoting ribosome inactivation.

Ribosome-binding protein that acts as an inhibitor of mRNA translation by promoting ribosome inactivation. Associates with the P- and E-sites of the ribosome and inserts a C-terminal helix into the mRNA exit channel to preclude translation. The protein is Interferon-related developmental regulator 2 of Mus musculus (Mouse).